Consider the following 297-residue polypeptide: Protein PecM (297 aa).

10 helical membrane passes run 6-26 (FAFYAPCVWGTTYFVTTQFLP), 38-58 (ALPAGIILILGKNLPPVGWLW), 60-80 (LFVLGALNIGVFFVMLFFAAY), 86-106 (VVALVGSLQPLIVILLSFLLL), 116-136 (VAAVAGGIGIVLLISLPKAPL), 138-158 (PAGLVASALATMSMASGLVLT), 167-187 (MTMLTFTGWQLFCGGLVILPV), 203-223 (LAGYLYLAIPGSLLAYFMWFS), 231-251 (VIMSLLGFLSPLVALLLGFLF), and 261-281 (LVGVVFIFSALIIVQDISLFS). 2 consecutive EamA domains span residues 12-130 (CVWG…LLIS) and 149-276 (MSMA…IVQD).

It belongs to the EamA transporter family.

The protein resides in the cell membrane. Involved in pectinase, cellulase, and blue pigment regulation. In Dickeya dadantii (strain 3937) (Erwinia chrysanthemi (strain 3937)), this protein is Protein PecM (pecM).